The sequence spans 176 residues: tRNA (adenine(37)-N6)-methyltransferase (176 aa).

In terms of domain architecture, TsaA-like spans 1-94 (SFSHIWVQFV…YLPFVEAQPD (94 aa)). Residues His12, 12 to 13 (HG), Arg40, Leu50, and 74 to 77 (LDGT) each bind S-adenosyl-L-methionine.

The protein belongs to the tRNA methyltransferase O family.

It catalyses the reaction N(6)-L-threonylcarbamoyladenosine(37) in tRNA + S-adenosyl-L-methionine = N(6)-methyl,N(6)-L-threonylcarbamoyladenosine(37) in tRNA + S-adenosyl-L-homocysteine + H(+). In terms of biological role, S-adenosyl-L-methionine-dependent methyltransferase responsible for the addition of the methyl group in the formation of N6-methyl-N6-threonylcarbamoyladenosine at position 37 (m(6)t(6)A37) of the tRNA anticodon loop of tRNA(Thr)(GGU). The methyl group of m(6)t(6)A37 appears to slightly improve the efficiency of the tRNA decoding ability. Binds to tRNA. This chain is tRNA (adenine(37)-N6)-methyltransferase, found in Eikenella corrodens.